The primary structure comprises 283 residues: Reaction center protein L chain (283 aa).

Helical transmembrane passes span 33–56 (GFFGVTTAFFALLGTILIFWGASQ), 85–113 (GLWQIITICATGAFISWALREVEICRKLG), and 116–141 (YHVPFGFAAAIIAYMTLVIFRPLLMG). Positions 154 and 174 each coordinate (7R,8Z)-bacteriochlorophyll b. A helical membrane pass occupies residues 171 to 200 (NPAHMLAVTLFFTTTLALALHGGLILSACN). Histidine 191 provides a ligand contact to Fe cation. Phenylalanine 217 contributes to the a ubiquinone binding site. The helical transmembrane segment at 226 to 252 (GTLGIHRLGYLLAINAGLWSAICIIIS) threads the bilayer. Fe cation is bound at residue histidine 231.

This sequence belongs to the reaction center PufL/M/PsbA/D family. Reaction center is composed of four bacteriochlorophylls, two bacteriopheophytins, two ubiquinones, one iron, and three highly hydrophobic polypeptide chains (designated L, M, and H).

It is found in the cellular chromatophore membrane. Functionally, the reaction center is a membrane-bound complex that mediates the initial photochemical event in the electron transfer process of photosynthesis. This chain is Reaction center protein L chain (pufL), found in Roseobacter denitrificans (strain ATCC 33942 / OCh 114) (Erythrobacter sp. (strain OCh 114)).